A 117-amino-acid polypeptide reads, in one-letter code: Putative iron-sulfur cluster insertion protein ErpA (117 aa).

3 residues coordinate iron-sulfur cluster: C45, C109, and C111.

The protein belongs to the HesB/IscA family. In terms of assembly, homodimer. Iron-sulfur cluster is required as a cofactor.

Functionally, required for insertion of 4Fe-4S clusters. The sequence is that of Putative iron-sulfur cluster insertion protein ErpA from Methylobacillus flagellatus (strain ATCC 51484 / DSM 6875 / VKM B-1610 / KT).